We begin with the raw amino-acid sequence, 386 residues long: Protein phosphatase methylesterase 1 (386 aa).

The tract at residues 1–38 is disordered; the sequence is MSALEKSMHLGRLPSRPPLPGSGGSQSGAKMRMGPGRK. The residue at position 15 (Ser15) is a Phosphoserine. Arg16 bears the Asymmetric dimethylarginine; alternate mark. At Arg16 the chain carries Omega-N-methylarginine; alternate. At Ser42 the chain carries Phosphoserine. The active site involves Ser156. The segment covering 254–265 has biased composition (acidic residues); that stretch reads IIEEEEEDEEGS. Residues 254 to 280 form a disordered region; sequence IIEEEEEDEEGSESISKRKKEDDMETK. The span at 268–280 shows a compositional bias: basic and acidic residues; the sequence is ISKRKKEDDMETK. His349 is a catalytic residue.

It belongs to the AB hydrolase superfamily. Binds PPP2CA and PPP2CB. In terms of processing, phosphorylated by SIK1 following increases in intracellular sodium, leading to dissociation from the protein phosphatase 2A (PP2A) complex and subsequent dephosphorylation of sodium/potassium-transporting ATPase ATP1A1.

The catalysed reaction is [phosphatase 2A protein]-C-terminal L-leucine methyl ester + H2O = [phosphatase 2A protein]-C-terminal L-leucine + methanol + H(+). Its function is as follows. Demethylates proteins that have been reversibly carboxymethylated. Demethylates PPP2CB (in vitro) and PPP2CA. Binding to PPP2CA displaces the manganese ion and inactivates the enzyme. The polypeptide is Protein phosphatase methylesterase 1 (PPME1) (Pongo abelii (Sumatran orangutan)).